A 272-amino-acid chain; its full sequence is Formamidopyrimidine-DNA glycosylase (272 aa).

The active-site Schiff-base intermediate with DNA is the P2. The Proton donor role is filled by E3. K58 serves as the catalytic Proton donor; for beta-elimination activity. DNA is bound by residues H94, R112, and R153. The FPG-type zinc-finger motif lies at 238–272; the sequence is FVYDRAGEPCRVCGAPIRQIVQGQRSTYFCPNCQR. The Proton donor; for delta-elimination activity role is filled by R262.

Belongs to the FPG family. As to quaternary structure, monomer. The cofactor is Zn(2+).

The enzyme catalyses Hydrolysis of DNA containing ring-opened 7-methylguanine residues, releasing 2,6-diamino-4-hydroxy-5-(N-methyl)formamidopyrimidine.. It carries out the reaction 2'-deoxyribonucleotide-(2'-deoxyribose 5'-phosphate)-2'-deoxyribonucleotide-DNA = a 3'-end 2'-deoxyribonucleotide-(2,3-dehydro-2,3-deoxyribose 5'-phosphate)-DNA + a 5'-end 5'-phospho-2'-deoxyribonucleoside-DNA + H(+). Involved in base excision repair of DNA damaged by oxidation or by mutagenic agents. Acts as a DNA glycosylase that recognizes and removes damaged bases. Has a preference for oxidized purines, such as 7,8-dihydro-8-oxoguanine (8-oxoG). Has AP (apurinic/apyrimidinic) lyase activity and introduces nicks in the DNA strand. Cleaves the DNA backbone by beta-delta elimination to generate a single-strand break at the site of the removed base with both 3'- and 5'-phosphates. This Burkholderia mallei (strain NCTC 10229) protein is Formamidopyrimidine-DNA glycosylase.